The sequence spans 377 residues: Membrane protein MLC1 (377 aa).

Positions 1-23 (MTQEPFREELAYDRMPTLERGRQ) are enriched in basic and acidic residues. The tract at residues 1-36 (MTQEPFREELAYDRMPTLERGRQDPASYAPDAKPSD) is disordered. Helical transmembrane passes span 52–72 (WVFS…SLYL), 82–100 (YLRC…SFTV), 111–131 (FQIL…WFGC), and 144–164 (FNLI…IIAA). Phosphoserine is present on residues Ser177 and Ser179. The next 4 membrane-spanning stretches (helical) occupy residues 199–219 (SVVE…ALNV), 230–250 (VTFF…HVAA), 257–277 (LVEV…TASG), and 304–324 (LLLL…GTAI).

As to quaternary structure, interacts with ATP1B1. Part of a complex containing ATP1B1, TRPV4, AQP4 and HEPACAM. In terms of tissue distribution, expressed in the brain, with highest levels found in the amygdala, nucleus caudatus, thalamus and hippocampus.

It localises to the membrane. The protein localises to the cell membrane. Its subcellular location is the cytoplasm. The protein resides in the perinuclear region. It is found in the endoplasmic reticulum. Its function is as follows. Transmembrane protein mainly expressed in brain astrocytes that may play a role in transport across the blood-brain and brain-cerebrospinal fluid barriers. Regulates the response of astrocytes to hypo-osmosis by promoting calcium influx. May function as regulatory protein of membrane protein complexes such as ion channels. This is Membrane protein MLC1 from Homo sapiens (Human).